The primary structure comprises 124 residues: uncharacterized protein (124 aa).

The interval 1–65 is disordered; the sequence is MAENSRYVRL…RPASSSNPDY (65 aa). Residues 37-47 are compositionally biased toward polar residues; the sequence is LNSNDAESQQV.

This is an uncharacterized protein from Microplitis demolitor (Parasitoid wasp).